The following is a 394-amino-acid chain: Short-chain dehydrogenase/reductase family 42E member 1 (394 aa).

The active-site Proton acceptor is Y153. Residue K157 participates in NAD(+) binding. Helical transmembrane passes span 283 to 303 and 367 to 387; these read LPLT…FIVG and FMLW…TWIL.

This sequence belongs to the 3-beta-HSD family.

It localises to the membrane. In Mus musculus (Mouse), this protein is Short-chain dehydrogenase/reductase family 42E member 1 (Sdr42e1).